The primary structure comprises 479 residues: Gamma-aminobutyric acid receptor subunit rho-1 (479 aa).

The first 21 residues, 1-21 (MLAVPNMRFGIFLLWWGWVLA), serve as a signal peptide directing secretion. At 22 to 280 (TESRMHWPGR…LYINFTLRRH (259 aa)) the chain is on the extracellular side. The interval 32 to 55 (EVHEMSKKGRPQRQRREVHEDAHK) is disordered. The span at 45-55 (QRREVHEDAHK) shows a compositional bias: basic and acidic residues. R125 lines the 4-aminobutanoate pocket. N-linked (GlcNAc...) asparagine glycosylation occurs at N140. A 4-aminobutanoate-binding site is contributed by S189. A disulfide bridge links C198 with C212. E217 contributes to the 4-aminobutanoate binding site. N-linked (GlcNAc...) asparagine glycosylation is found at N234 and N274. Residues 281–301 (IFFFLLQTYFPATLMVMLSWV) traverse the membrane as a helical segment. The Cytoplasmic portion of the chain corresponds to 302 to 313 (SFWIDRRAVPAR). The chain crosses the membrane as a helical span at residues 314–334 (VPLGITTVLTMSTIITGVNAS). Residues 335–345 (MPRVSYIKAVD) lie on the Extracellular side of the membrane. Residues 346–366 (IYLWVSFVFVFLSVLEYAAVN) traverse the membrane as a helical segment. The Cytoplasmic portion of the chain corresponds to 367 to 457 (YLTTVQERKE…MRIDTHAIDK (91 aa)). A helical membrane pass occupies residues 458–478 (YSRIIFPAAYILFNLIYWSIF). A topological domain (extracellular) is located at residue S479.

The protein belongs to the ligand-gated ion channel (TC 1.A.9) family. Gamma-aminobutyric acid receptor (TC 1.A.9.5) subfamily. GABRR1 sub-subfamily. As to quaternary structure, three rho subunits (rho-1/GBRR1, rho-2/GBRR2 and rho-3/GBRR3) coassemble either to form functional homopentamers or heteropentamers. Rho-1/GBRR1 subunits can also associate with alpha-1/GBRA1 subunits to form a functional GABAAR. Interacts with SQSTM1. Highly expressed in the retina. Expressed in a lesser extent in brain, lung and thymus.

The protein resides in the postsynaptic cell membrane. The protein localises to the cell membrane. The enzyme catalyses chloride(in) = chloride(out). Its activity is regulated as follows. Inhibited by TPMPA, a rho-specific antagonist, when forming a homopentamer. In contrast with other GABAARs, rho-1 GABAAR is not inhibited by bicuculline, when forming a homopentamer. Its function is as follows. Rho subunit of the pentameric ligand-gated chloride channels responsible for mediating the effects of gamma-aminobutyric acid (GABA), the major inhibitory neurotransmitter in the brain. Rho-containing GABA-gated chloride channels are a subclass of GABA(A) receptors (GABAARs) entirely composed of rho subunits, where GABA molecules bind at the rho intersubunit interfaces. When activated by GABA, rho-GABAARs selectively allow the flow of chloride anions across the cell membrane down their electrochemical gradient. Rho-1 subunits are primarily expressed in retina where rho-1-containing GABAARs may play a role in retinal neurotransmission. Rho-1 GABAARs are also involved in neuronal tonic (extrasynaptic) and phasic (synaptic) transmission in the Purkinje neurons of the cerebellum. Rho-1 GABAARs may also contribute to the regulation of glial development in the cerebellum by controlling extrasynaptic transmission. This Homo sapiens (Human) protein is Gamma-aminobutyric acid receptor subunit rho-1.